Reading from the N-terminus, the 237-residue chain is Flagellar L-ring protein (237 aa).

An N-terminal signal peptide occupies residues 1 to 24 (MNRLSVPRFSVLIASLCGITLLSG). Cys-25 carries the N-palmitoyl cysteine lipid modification. Cys-25 carries S-diacylglycerol cysteine lipidation.

Belongs to the FlgH family. As to quaternary structure, the basal body constitutes a major portion of the flagellar organelle and consists of four rings (L,P,S, and M) mounted on a central rod.

Its subcellular location is the cell outer membrane. The protein resides in the bacterial flagellum basal body. Functionally, assembles around the rod to form the L-ring and probably protects the motor/basal body from shearing forces during rotation. The sequence is that of Flagellar L-ring protein from Pseudomonas syringae pv. syringae (strain B728a).